A 134-amino-acid polypeptide reads, in one-letter code: Translation initiation factor 2 subunit beta (134 aa).

This sequence belongs to the eIF-2-beta/eIF-5 family. As to quaternary structure, heterotrimer composed of an alpha, a beta and a gamma chain.

EIF-2 functions in the early steps of protein synthesis by forming a ternary complex with GTP and initiator tRNA. The protein is Translation initiation factor 2 subunit beta of Pyrobaculum neutrophilum (strain DSM 2338 / JCM 9278 / NBRC 100436 / V24Sta) (Thermoproteus neutrophilus).